The chain runs to 271 residues: MPELPEVEVTRQGVSPYLIDNTVTDLIVRNPSLRWPVPEIAKQIIGQTIRNVRRRAKYLLIDTDAGTTIVHLGMSGSLRILPATTPAEKHDHIDLVLASGKALRFNDPRRFGAWLWCELPEQAHPLLSKLGPEPLTDAFNAPYLLESLANKKKAIKLCLMDNHIVVGVGNIYANEALFAAGIHPQAEAGKVDAERIEILVSEVKQILAGAIKQGGTTLKDFTNADGKPGYFAQKLHVYGRGGKTCTQCGHMLSEIKLGQRATVFCSLCQQR.

Proline 2 acts as the Schiff-base intermediate with DNA in catalysis. Glutamate 3 (proton donor) is an active-site residue. Lysine 57 serves as the catalytic Proton donor; for beta-elimination activity. DNA-binding residues include histidine 90, arginine 109, and lysine 151. The segment at 236-270 (HVYGRGGKTCTQCGHMLSEIKLGQRATVFCSLCQQ) adopts an FPG-type zinc-finger fold. Residue arginine 260 is the Proton donor; for delta-elimination activity of the active site.

Belongs to the FPG family. Monomer. The cofactor is Zn(2+).

It catalyses the reaction Hydrolysis of DNA containing ring-opened 7-methylguanine residues, releasing 2,6-diamino-4-hydroxy-5-(N-methyl)formamidopyrimidine.. It carries out the reaction 2'-deoxyribonucleotide-(2'-deoxyribose 5'-phosphate)-2'-deoxyribonucleotide-DNA = a 3'-end 2'-deoxyribonucleotide-(2,3-dehydro-2,3-deoxyribose 5'-phosphate)-DNA + a 5'-end 5'-phospho-2'-deoxyribonucleoside-DNA + H(+). In terms of biological role, involved in base excision repair of DNA damaged by oxidation or by mutagenic agents. Acts as a DNA glycosylase that recognizes and removes damaged bases. Has a preference for oxidized purines, such as 7,8-dihydro-8-oxoguanine (8-oxoG). Has AP (apurinic/apyrimidinic) lyase activity and introduces nicks in the DNA strand. Cleaves the DNA backbone by beta-delta elimination to generate a single-strand break at the site of the removed base with both 3'- and 5'-phosphates. The chain is Formamidopyrimidine-DNA glycosylase from Shewanella pealeana (strain ATCC 700345 / ANG-SQ1).